A 297-amino-acid polypeptide reads, in one-letter code: GTPase Era (297 aa).

One can recognise an Era-type G domain in the interval 7-174 (HSGFVSIIGR…VQVVRDLLPE (168 aa)). The tract at residues 15–22 (GRPNVGKS) is G1. Residue 15–22 (GRPNVGKS) participates in GTP binding. Residues 41 to 45 (QTTRN) are G2. Residues 62–65 (DTPG) are G3. Residues 62-66 (DTPGI) and 124-127 (NKVD) contribute to the GTP site. The interval 124 to 127 (NKVD) is G4. Residues 153-155 (VSA) form a G5 region. Residues 205 to 282 (THDEVPYSVA…FLELFVRVSR (78 aa)) enclose the KH type-2 domain.

It belongs to the TRAFAC class TrmE-Era-EngA-EngB-Septin-like GTPase superfamily. Era GTPase family. Monomer.

It localises to the cytoplasm. The protein resides in the cell inner membrane. In terms of biological role, an essential GTPase that binds both GDP and GTP, with rapid nucleotide exchange. Plays a role in 16S rRNA processing and 30S ribosomal subunit biogenesis and possibly also in cell cycle regulation and energy metabolism. In Geotalea daltonii (strain DSM 22248 / JCM 15807 / FRC-32) (Geobacter daltonii), this protein is GTPase Era.